A 304-amino-acid chain; its full sequence is Coenzyme PQQ synthesis protein B (304 aa).

The protein belongs to the PqqB family.

It functions in the pathway cofactor biosynthesis; pyrroloquinoline quinone biosynthesis. May be involved in the transport of PQQ or its precursor to the periplasm. This is Coenzyme PQQ synthesis protein B from Ectopseudomonas mendocina (strain ymp) (Pseudomonas mendocina).